The primary structure comprises 276 residues: MALDFIEILKVIFLGIVEGITEWLPISSTGHMLLVDEFITLNMSEAFKEMFFVVIQLGAILAVVVMFWNKMFPFQFKNKSQSIIKKDTFSLWFKVAVACVPSAIMGILFDDYLDAHLHTPVVIAIMLILYGVLFIVIENRNKKRTATTSTLADISYKTALMIGVFQVLSLIPGTSRSGATIIGALLIGVSRVAAAEFTFFLAVPTMLGASAFKLLKFGFDFTSAELLTLVIGMAVAFAVSVFVIKFLMSYIKKHDFKVFGWYRIVLGILVLLITAI.

A run of 8 helical transmembrane segments spans residues 6-26 (IEILKVIFLGIVEGITEWLPI), 49-69 (EMFFVVIQLGAILAVVVMFWN), 89-109 (FSLWFKVAVACVPSAIMGILF), 117-137 (LHTPVVIAIMLILYGVLFIVI), 151-171 (LADISYKTALMIGVFQVLSLI), 181-201 (IIGALLIGVSRVAAAEFTFFL), 224-244 (AELLTLVIGMAVAFAVSVFVI), and 256-276 (FKVFGWYRIVLGILVLLITAI).

This sequence belongs to the UppP family.

Its subcellular location is the cell membrane. The enzyme catalyses di-trans,octa-cis-undecaprenyl diphosphate + H2O = di-trans,octa-cis-undecaprenyl phosphate + phosphate + H(+). Catalyzes the dephosphorylation of undecaprenyl diphosphate (UPP). Confers resistance to bacitracin. This Enterococcus faecalis (Streptococcus faecalis) protein is Undecaprenyl-diphosphatase.